A 631-amino-acid chain; its full sequence is MNSSDEEKQLQLITSLKEQAIGEYEDLRAENQKTKEKCDKIRQERDEAVKKLEEFQKISHMVIEEVNFMQNHLEIEKTCRESAEALATKLNKENKTLKRISMLYMAKLGPDVITEEINIDDDDPATDTDAAAETCVSVQCQKQIKELRDQIVSVQEEKKVLAIELENLKSKLGEVMEEVNKVKQEKAVLNSEVLEQRKVLEKCNRVSMLAVEEYEELQVNLELEKDLRKKAESFAQEMFIEQNKLKRQSHLLLQSSLPDQQLLKALDENAKLIQQLEEERIQHQKKVKELEERLENEALHKEIHNLRQQLELLEDDKRELEQKYQSSEEKARNLKHSVDELQKRVNQSENSVPPPPPPPPPLPPPPPNPIRSLMSMIRKRSHPSGNSAKKEKTTQPETAEEVTDLKRQAVEEMMDRIKKGVHLRPVNQTARPKAKPDSLKGSESAVDELKGILGTLNKSTSSRSLKSLGPENSETELERILRRRKLTAEADSSSPTGILATSESKSMPVLGSVSSVTKSALNKKTLEAEFNNPCPLTPEPGEGPRKLEGCTNPKVTFQPPSKGGYRRKCVGSENQAEPVVVLDPVSTHEPQTKDQAAEKDPTQFEEEGGETQPEYKEDSGGKTGETDSSNC.

Methionine 1 bears the N-acetylmethionine mark. Phosphoserine occurs at positions 3 and 4. Residues 7–353 (EKQLQLITSL…RVNQSENSVP (347 aa)) adopt a coiled-coil conformation. The residue at position 101 (serine 101) is a Phosphoserine; by PAK1. Serine 249 carries the post-translational modification Phosphoserine. Disordered stretches follow at residues 343-404 (KRVN…EVTD) and 417-508 (IKKG…KSMP). Over residues 352 to 369 (VPPPPPPPPPLPPPPPNP) the composition is skewed to pro residues. Position 375 is a phosphoserine (serine 375). A compositionally biased stretch (polar residues) spans 456 to 465 (LNKSTSSRSL). At serine 473 the chain carries Phosphoserine. The residue at position 487 (threonine 487) is a Phosphothreonine. A compositionally biased stretch (polar residues) spans 490–505 (ADSSSPTGILATSESK). The residue at position 494 (serine 494) is a Phosphoserine. Residue threonine 496 is modified to Phosphothreonine. Phosphoserine is present on residues serine 506 and serine 515. Positions 530–631 (FNNPCPLTPE…KTGETDSSNC (102 aa)) are disordered. Threonine 537 is subject to Phosphothreonine. Positions 590-602 (PQTKDQAAEKDPT) are enriched in basic and acidic residues.

Belongs to the shootin family. In terms of assembly, interacts with L1CAM; this interaction occurs at axonal growth cones. Interacts with actin filament retrograde flow; this interaction is enhanced in a netrin-1- and PAK1-dependent manner and promotes F-actin-substrate coupling and concomitant formation of traction forces at axonal growth cones. Interacts with RUFY3. Interacts with PFN2. Interacts (via N-terminus) with KIF20B; this interaction is direct and promotes the association of SHTN1 to microtubules in primary neurons. Associates with microtubule. Post-translationally, phosphorylated on Ser-101 and Ser-249 by PAK1 through a CDC42- and RAC1-dependent signaling pathway, which enhances its association with F-actin retrograde flow in filopodia and lamellipodia of axonal growth cones. Phosphorylation on Ser-101 and Ser-249 is increased by netrin-1. In terms of tissue distribution, expressed in hippocampal neurons.

Its subcellular location is the perikaryon. The protein resides in the cell projection. It is found in the axon. The protein localises to the growth cone. It localises to the cytoplasm. Its subcellular location is the cytoskeleton. The protein resides in the filopodium. It is found in the lamellipodium. Its function is as follows. Involved in the generation of internal asymmetric signals required for neuronal polarization and neurite outgrowth. Mediates netrin-1-induced F-actin-substrate coupling or 'clutch engagement' within the axon growth cone through activation of CDC42, RAC1 and PAK1-dependent signaling pathway, thereby converting the F-actin retrograde flow into traction forces, concomitantly with filopodium extension and axon outgrowth. Plays a role in cytoskeletal organization by regulating the subcellular localization of phosphoinositide 3-kinase (PI3K) activity at the axonal growth cone. Also plays a role in regenerative neurite outgrowth. In the developing cortex, cooperates with KIF20B to promote both the transition from the multipolar to the bipolar stage and the radial migration of cortical neurons from the ventricular zone toward the superficial layer of the neocortex. Involved in the accumulation of phosphatidylinositol 3,4,5-trisphosphate (PIP3) in the growth cone of primary hippocampal neurons. The chain is Shootin-1 from Mus musculus (Mouse).